The chain runs to 93 residues: U12-lycotoxin-Ls1d (93 aa).

Residues 1–18 (MKFAVILLFSLVVLAVAS) form the signal peptide. Residues 19-38 (ESVEEVRREIDIEDLPEQQR) constitute a propeptide that is removed on maturation.

It belongs to the neurotoxin 31 family. Contains 5 disulfide bonds. In terms of tissue distribution, expressed by the venom gland.

It is found in the secreted. This Lycosa singoriensis (Wolf spider) protein is U12-lycotoxin-Ls1d.